Here is a 237-residue protein sequence, read N- to C-terminus: tRNA(His) guanylyltransferase (237 aa).

Mg(2+)-binding residues include D29, G30, and D77. Residues 29–34 (DGKHFH) and 76–77 (SD) each bind GTP.

Belongs to the tRNA(His) guanylyltransferase family. It depends on Mg(2+) as a cofactor.

It catalyses the reaction a 5'-end ribonucleotide-tRNA(His) + GTP + ATP + H2O = a 5'-end phospho-guanosine-ribonucleotide-tRNA(His) + AMP + 2 diphosphate + H(+). Adds a GMP to the 5'-end of tRNA(His) after transcription and RNase P cleavage. This chain is tRNA(His) guanylyltransferase (THG1), found in Eremothecium gossypii (strain ATCC 10895 / CBS 109.51 / FGSC 9923 / NRRL Y-1056) (Yeast).